The chain runs to 705 residues: MTRRTSIERYRNIGISAHIDAGKTTTTERILFYTGITHKLGEVHEGAATMDWMEQERGITITSAATTAFWRGMAGNYPEHRINIIDTPGHVDFTIEVERSMRVLDGACMVYDSVGGVQPQSETVWRQANKYGVPRIAFVNKMDRVGADFFRVQRQIVERLKGDAVPIQIPVGAEDHFEGVVDLVKMKAIIWDDASQGVRFEYRDIPPELQAQAEQWREKMIEKAAEANEALLEKYLSGQPLSEDEIKSGLRARTVANEIVPMLCGSAFKNKGVQAMLDAVIDYLPSPADVPAIIGHDERDREIERHPADDEPFSALAFKIMTDPFVGQLVFFRVYSGVVKSGDSVLNPLKSKKERLGRILQMHANERREISEVYAGDIAAAVGIKEITTGDTLTDPAHVIILERMTFPEPVISQAVEPRTKADQEKMGIALNRLAQEDPSFRVRTDEESGQTIISGMGELHLEILVDRMKREFGVEANVGKPQVAYRETIRSTVTDVEGKFVKQSGGRGQYGHVVLKLEPQEQGKGYEFVDAIKGGVVPREFIPAVDRGVRETLNTGVLAGYPVVDVKVTLVFGSYHDVDSNENAFRMAASMAFKEGMRRAKPVLLEPMMHVEVETPEDFTGNVMGDLSSRRGMVQGMEDIAGGGGKLVRAEVPLAEMFGYSTSLRSLTQGRATYSMEFKHYAEAPRQVAEQIIAARGSGAAARG.

A tr-type G domain is found at 8–288 (ERYRNIGISA…AVIDYLPSPA (281 aa)). GTP is bound by residues 17 to 24 (AHIDAGKT), 86 to 90 (DTPGH), and 140 to 143 (NKMD).

It belongs to the TRAFAC class translation factor GTPase superfamily. Classic translation factor GTPase family. EF-G/EF-2 subfamily.

It is found in the cytoplasm. In terms of biological role, catalyzes the GTP-dependent ribosomal translocation step during translation elongation. During this step, the ribosome changes from the pre-translocational (PRE) to the post-translocational (POST) state as the newly formed A-site-bound peptidyl-tRNA and P-site-bound deacylated tRNA move to the P and E sites, respectively. Catalyzes the coordinated movement of the two tRNA molecules, the mRNA and conformational changes in the ribosome. This chain is Elongation factor G 2, found in Bordetella parapertussis (strain 12822 / ATCC BAA-587 / NCTC 13253).